The primary structure comprises 156 residues: Cyclic pyranopterin monophosphate synthase (156 aa).

Substrate contacts are provided by residues 75–77 (LCH) and 111–112 (ME). Asp126 is an active-site residue.

Belongs to the MoaC family. Homohexamer; trimer of dimers.

It carries out the reaction (8S)-3',8-cyclo-7,8-dihydroguanosine 5'-triphosphate = cyclic pyranopterin phosphate + diphosphate. It functions in the pathway cofactor biosynthesis; molybdopterin biosynthesis. Its function is as follows. Catalyzes the conversion of (8S)-3',8-cyclo-7,8-dihydroguanosine 5'-triphosphate to cyclic pyranopterin monophosphate (cPMP). This is Cyclic pyranopterin monophosphate synthase from Corynebacterium glutamicum (strain R).